Reading from the N-terminus, the 499-residue chain is Apolipoprotein N-acyltransferase (499 aa).

6 helical membrane-spanning segments follow: residues 9–29, 50–70, 77–97, 114–134, 148–168, and 183–203; these read LLLG…PALL, LGYI…SIGV, FWWA…FFVS, FIFC…FTGL, ILIQ…VIYI, and LKVL…YGSV. The 245-residue stretch at 220 to 464 folds into the CN hydrolase domain; that stretch reads VQPSIPQTEK…DGLIPKKLDS (245 aa). Catalysis depends on glutamate 259, which acts as the Proton acceptor. Residue lysine 322 is part of the active site. The active-site Nucleophile is cysteine 372. Residues 466-486 traverse the membrane as a helical segment; it reads TIFSKFGNITILLIVFFIFLV.

It belongs to the CN hydrolase family. Apolipoprotein N-acyltransferase subfamily.

The protein localises to the cell inner membrane. The catalysed reaction is N-terminal S-1,2-diacyl-sn-glyceryl-L-cysteinyl-[lipoprotein] + a glycerophospholipid = N-acyl-S-1,2-diacyl-sn-glyceryl-L-cysteinyl-[lipoprotein] + a 2-acyl-sn-glycero-3-phospholipid + H(+). The protein operates within protein modification; lipoprotein biosynthesis (N-acyl transfer). In terms of biological role, catalyzes the phospholipid dependent N-acylation of the N-terminal cysteine of apolipoprotein, the last step in lipoprotein maturation. This Rickettsia bellii (strain RML369-C) protein is Apolipoprotein N-acyltransferase.